The following is a 406-amino-acid chain: uncharacterized protein (406 aa).

This is an uncharacterized protein from Aquifex aeolicus (strain VF5).